Consider the following 509-residue polypeptide: Maturase K (509 aa).

The protein belongs to the intron maturase 2 family. MatK subfamily.

Its subcellular location is the plastid. It localises to the chloroplast. Its function is as follows. Usually encoded in the trnK tRNA gene intron. Probably assists in splicing its own and other chloroplast group II introns. The polypeptide is Maturase K (Opuntia quimilo (Cactus)).